Here is a 403-residue protein sequence, read N- to C-terminus: Adenylate cyclase (403 aa).

Positions 1–16 are enriched in polar residues; sequence MSTEHTNTPRADSPQS. Positions 1 to 37 are disordered; it reads MSTEHTNTPRADSPQSAAEAVRGARQHAPAATPAESD. Residues 31–60 are pyruvate binding; that stretch reads ATPAESDPILELAEAMEGPLRIPAHTPEAV. Residues 238–347 form the Guanylate cyclase domain; sequence AVGFADLVSY…PTVNMAARLT (110 aa). Mg(2+) contacts are provided by aspartate 243 and aspartate 287.

This sequence belongs to the adenylyl cyclase class-3 family. As to quaternary structure, homodimer. Requires Mg(2+) as cofactor.

The protein localises to the cytoplasm. The enzyme catalyses ATP = 3',5'-cyclic AMP + diphosphate. With respect to regulation, pyruvate-stimulated. Its function is as follows. Plays essential roles in regulation of cellular metabolism by catalyzing the synthesis of a second messenger, cAMP. The sequence is that of Adenylate cyclase (cya) from Glutamicibacter nicotianae (Arthrobacter nicotianae).